The sequence spans 238 residues: Probable 2-phosphosulfolactate phosphatase (238 aa).

Belongs to the ComB family. Mg(2+) serves as cofactor.

The catalysed reaction is (2R)-O-phospho-3-sulfolactate + H2O = (2R)-3-sulfolactate + phosphate. The sequence is that of Probable 2-phosphosulfolactate phosphatase from Clostridium botulinum (strain Alaska E43 / Type E3).